Consider the following 121-residue polypeptide: Large ribosomal subunit protein uL14 (121 aa).

This sequence belongs to the universal ribosomal protein uL14 family. In terms of assembly, part of the 50S ribosomal subunit. Forms a cluster with proteins L3 and L19. In the 70S ribosome, L14 and L19 interact and together make contacts with the 16S rRNA in bridges B5 and B8.

Functionally, binds to 23S rRNA. Forms part of two intersubunit bridges in the 70S ribosome. This Porphyromonas gingivalis (strain ATCC 33277 / DSM 20709 / CIP 103683 / JCM 12257 / NCTC 11834 / 2561) protein is Large ribosomal subunit protein uL14.